The following is a 198-amino-acid chain: Na(+)-translocating NADH-quinone reductase subunit E (198 aa).

6 helical membrane-spanning segments follow: residues 11-31, 39-59, 77-97, 109-129, 140-160, and 176-196; these read AVFIENMALAFFLGMCTFLAV, FGLGIAVTVVLGLSVPLNNLV, FLNFITFIGVIAALVQILEMI, LGIFLPLITVNCAIFGGVSFM, IVYGFGSGIGWMLAIVLLASI, and LGVTFVTTGLMALGFMSFSGV.

Belongs to the NqrDE/RnfAE family. As to quaternary structure, composed of six subunits; NqrA, NqrB, NqrC, NqrD, NqrE and NqrF.

The protein localises to the cell inner membrane. It catalyses the reaction a ubiquinone + n Na(+)(in) + NADH + H(+) = a ubiquinol + n Na(+)(out) + NAD(+). In terms of biological role, NQR complex catalyzes the reduction of ubiquinone-1 to ubiquinol by two successive reactions, coupled with the transport of Na(+) ions from the cytoplasm to the periplasm. NqrA to NqrE are probably involved in the second step, the conversion of ubisemiquinone to ubiquinol. The protein is Na(+)-translocating NADH-quinone reductase subunit E of Proteus mirabilis (strain HI4320).